Here is a 197-residue protein sequence, read N- to C-terminus: Lipoprotein signal peptidase (197 aa).

2 helical membrane-spanning segments follow: residues 73–93 and 97–117; these read SNAI…YLMI and TIGS…NLID. Active-site residues include Asp-126 and Asp-144. Residues 135–155 form a helical membrane-spanning segment; sequence YSFPVFNLADCFITIGVIILI.

The protein belongs to the peptidase A8 family.

It localises to the cell inner membrane. The enzyme catalyses Release of signal peptides from bacterial membrane prolipoproteins. Hydrolyzes -Xaa-Yaa-Zaa-|-(S,diacylglyceryl)Cys-, in which Xaa is hydrophobic (preferably Leu), and Yaa (Ala or Ser) and Zaa (Gly or Ala) have small, neutral side chains.. It functions in the pathway protein modification; lipoprotein biosynthesis (signal peptide cleavage). In terms of biological role, this protein specifically catalyzes the removal of signal peptides from prolipoproteins. The protein is Lipoprotein signal peptidase of Rickettsia felis (strain ATCC VR-1525 / URRWXCal2) (Rickettsia azadi).